A 319-amino-acid polypeptide reads, in one-letter code: tRNA-cytidine(32) 2-sulfurtransferase (319 aa).

Positions 43–48 match the PP-loop motif motif; that stretch reads SGGKDS. Residues Cys-118, Cys-121, and Cys-209 each coordinate [4Fe-4S] cluster.

This sequence belongs to the TtcA family. In terms of assembly, homodimer. Mg(2+) serves as cofactor. [4Fe-4S] cluster is required as a cofactor.

It localises to the cytoplasm. It carries out the reaction cytidine(32) in tRNA + S-sulfanyl-L-cysteinyl-[cysteine desulfurase] + AH2 + ATP = 2-thiocytidine(32) in tRNA + L-cysteinyl-[cysteine desulfurase] + A + AMP + diphosphate + H(+). Its pathway is tRNA modification. In terms of biological role, catalyzes the ATP-dependent 2-thiolation of cytidine in position 32 of tRNA, to form 2-thiocytidine (s(2)C32). The sulfur atoms are provided by the cysteine/cysteine desulfurase (IscS) system. The polypeptide is tRNA-cytidine(32) 2-sulfurtransferase (Neisseria gonorrhoeae (strain NCCP11945)).